The primary structure comprises 719 residues: Nucleolar complex protein 2 homolog (719 aa).

Positions 1 to 24 are enriched in basic residues; sequence MKLLKKSSSLKKGVTKRAKLQKKP. Disordered stretches follow at residues 1 to 67, 86 to 136, and 643 to 719; these read MKLL…GMKK, LQQE…TKIK, and ALEN…SDED. Over residues 25–42 the composition is skewed to basic and acidic residues; it reads PSKDEASSSDEELAKLDG. Residues 89–130 are compositionally biased toward acidic residues; the sequence is EDADLLNMEEDEDDDEEGEDNEDEEDEEEEEESDEDDDEEDD. Basic and acidic residues predominate over residues 643-661; it reads ALENSKKDDKKKKKEEEAA.

It belongs to the NOC2 family.

The protein resides in the nucleus. Required for normal somatic gonad development and for regulation of germline development and proliferation. The chain is Nucleolar complex protein 2 homolog (pro-2) from Caenorhabditis briggsae.